We begin with the raw amino-acid sequence, 163 residues long: Transcriptional repressor NrdR (163 aa).

Residues 1-22 (MRCPKCQSLKSSVIDSRQAEDG) are disordered. A zinc finger lies at 3 to 34 (CPKCQSLKSSVIDSRQAEDGNTIRRRRSCDQC). The 91-residue stretch at 49–139 (LVVVKKDGTR…VYRSFKDVGE (91 aa)) folds into the ATP-cone domain.

The protein belongs to the NrdR family. Zn(2+) is required as a cofactor.

Functionally, negatively regulates transcription of bacterial ribonucleotide reductase nrd genes and operons by binding to NrdR-boxes. The chain is Transcriptional repressor NrdR from Streptococcus suis (strain 98HAH33).